The sequence spans 465 residues: tRNA modification GTPase MnmE (465 aa).

Positions 30, 92, and 132 each coordinate (6S)-5-formyl-5,6,7,8-tetrahydrofolate. The 162-residue stretch at 227–388 (GLQVALVGRP…LIEAVLKTCG (162 aa)) folds into the TrmE-type G domain. Residue asparagine 237 participates in K(+) binding. GTP contacts are provided by residues 237 to 242 (NVGKSS), 256 to 262 (TDLPGTT), 281 to 284 (DTAG), and 342 to 345 (NKAD). Residue serine 241 coordinates Mg(2+). K(+)-binding residues include threonine 256, leucine 258, and threonine 261. Threonine 262 provides a ligand contact to Mg(2+). Lysine 465 contributes to the (6S)-5-formyl-5,6,7,8-tetrahydrofolate binding site.

The protein belongs to the TRAFAC class TrmE-Era-EngA-EngB-Septin-like GTPase superfamily. TrmE GTPase family. In terms of assembly, homodimer. Heterotetramer of two MnmE and two MnmG subunits. K(+) serves as cofactor.

The protein resides in the cytoplasm. Exhibits a very high intrinsic GTPase hydrolysis rate. Involved in the addition of a carboxymethylaminomethyl (cmnm) group at the wobble position (U34) of certain tRNAs, forming tRNA-cmnm(5)s(2)U34. The sequence is that of tRNA modification GTPase MnmE from Prochlorococcus marinus (strain MIT 9303).